Consider the following 336-residue polypeptide: MGRSAFGSRTRMTAFVDLAARLAAEPADAALKDVVLTIAETCAQISRVVASGALSGSLGAAGSTNVQDEEQKKLDVITNDMLSDALKACGPVAGLASEELEEVEPTGRVGGYLVTFDPLDGSSNIDVNVSVGTIFSVLPAPAGHAPTEGDFLQPGRNQVAAGYAVYGPQTMLVVTLSGGVNGFTLSADGRWLLTHPDLAIKPDTAEFAINMSNQRHWAPAVRRYIDGCLQGKDGARGKNFNMRWVASMVADVHRIMMRGGVFMYPWDAREPDKPGKLRLMYEANPMSLLAERAGGKSIEGLNEILDINPAKLHQRVPVVLGSANEVEVIRAEMRAG.

Positions 98, 117, 119, and 120 each coordinate Mg(2+). Residues 120-123, asparagine 210, and lysine 276 each bind substrate; that span reads DGSS. Glutamate 282 lines the Mg(2+) pocket.

It belongs to the FBPase class 1 family. As to quaternary structure, homotetramer. Mg(2+) serves as cofactor.

The protein localises to the cytoplasm. The catalysed reaction is beta-D-fructose 1,6-bisphosphate + H2O = beta-D-fructose 6-phosphate + phosphate. The protein operates within carbohydrate biosynthesis; gluconeogenesis. The sequence is that of Fructose-1,6-bisphosphatase class 1 from Caulobacter vibrioides (strain ATCC 19089 / CIP 103742 / CB 15) (Caulobacter crescentus).